We begin with the raw amino-acid sequence, 801 residues long: Phosphatidylinositol 4-kinase beta (801 aa).

Disordered regions lie at residues 1–29 (MGDT…GGSL), 101–121 (EDEM…RRRQ), and 250–304 (RKRE…EDEP). Glycine 2 carries the N-acetylglycine modification. The tract at residues 2-68 (GDTAVEPAPL…VRLLHGAVAV (67 aa)) is interaction with ACBD3. The region spanning 29 to 242 (LLSVITEGVG…GTKLRKLILS (214 aa)) is the PIK helical domain. The residue at position 258 (serine 258) is a Phosphoserine. Residues 259 to 268 (PALNTGLSPS) are compositionally biased toward polar residues. At threonine 263 the chain carries Phosphothreonine. A phosphoserine mark is found at serine 266, serine 275, serine 277, serine 284, serine 294, and serine 413. A compositionally biased stretch (low complexity) spans 278–294 (DATASISLSSSLKRTAS). Threonine 423 bears the Phosphothreonine mark. At serine 496 the chain carries Phosphoserine. Phosphothreonine occurs at positions 502 and 504. Positions 520 to 786 (EPWQEKVRRI…MVDGSMRSIT (267 aa)) constitute a PI3K/PI4K catalytic domain. The G-loop stretch occupies residues 526–532 (VRRIREG). Residues 653–661 (QVKDRHNGN) are catalytic loop. The activation loop stretch occupies residues 672–696 (HIDFGFILSSSPRNLGFETSAFKLT).

The protein belongs to the PI3/PI4-kinase family. Type III PI4K subfamily. As to quaternary structure, interacts with ARF1 and ARF3 in the Golgi complex, but not with ARF4, ARF5 or ARF6. Interacts with NCS1/FREQ in a calcium-independent manner. Interacts with CALN1/CABP8 and CALN2/CABP7; in a calcium-dependent manner; this interaction competes with NCS1/FREQ binding. Interacts with ACBD3. Interacts with ARMH3, YWHAB, YWHAE, YWHAG, YWHAH, YWHAQ, YWHAZ and SFN. Interacts with GGA2 (via VHS domain); the interaction is important for PI4KB location at the Golgi apparatus membrane. Interacts with ATG9A. Requires Mg(2+) as cofactor. Mn(2+) serves as cofactor.

It is found in the endomembrane system. Its subcellular location is the mitochondrion outer membrane. The protein localises to the rough endoplasmic reticulum membrane. It localises to the golgi apparatus. The protein resides in the golgi apparatus membrane. The enzyme catalyses a 1,2-diacyl-sn-glycero-3-phospho-(1D-myo-inositol) + ATP = a 1,2-diacyl-sn-glycero-3-phospho-(1D-myo-inositol 4-phosphate) + ADP + H(+). Its activity is regulated as follows. Inhibited by wortmannin. Increased kinase activity upon interaction with NCS1/FREQ. Its function is as follows. Phosphorylates phosphatidylinositol (PI) in the first committed step in the production of the second messenger inositol-1,4,5,-trisphosphate (PIP). May regulate Golgi disintegration/reorganization during mitosis, possibly via its phosphorylation. Involved in Golgi-to-plasma membrane trafficking. May play an important role in the inner ear development. The protein is Phosphatidylinositol 4-kinase beta (PI4KB) of Sorex araneus (Eurasian common shrew).